Here is a 145-residue protein sequence, read N- to C-terminus: Mini-ribonuclease 3 (145 aa).

D27 is a catalytic residue.

It belongs to the MrnC RNase family. As to quaternary structure, homodimer. Mg(2+) is required as a cofactor.

The protein resides in the cytoplasm. In terms of biological role, involved in correct processing of both the 5' and 3' ends of 23S rRNA precursor. Processes 30S rRNA precursor transcript even in absence of ribonuclease 3 (Rnc); Rnc processes 30S rRNA into smaller rRNA precursors. This chain is Mini-ribonuclease 3, found in Kosmotoga olearia (strain ATCC BAA-1733 / DSM 21960 / TBF 19.5.1).